The primary structure comprises 213 residues: Kynurenine formamidase (213 aa).

W18 is a substrate binding site. Zn(2+)-binding residues include H48, H52, and D54. Catalysis depends on H58, which acts as the Proton donor/acceptor. Residues H160 and E172 each coordinate Zn(2+).

Belongs to the Cyclase 1 superfamily. KynB family. In terms of assembly, homodimer. The cofactor is Zn(2+).

The catalysed reaction is N-formyl-L-kynurenine + H2O = L-kynurenine + formate + H(+). It functions in the pathway amino-acid degradation; L-tryptophan degradation via kynurenine pathway; L-kynurenine from L-tryptophan: step 2/2. Functionally, catalyzes the hydrolysis of N-formyl-L-kynurenine to L-kynurenine, the second step in the kynurenine pathway of tryptophan degradation. The chain is Kynurenine formamidase from Burkholderia mallei (strain NCTC 10247).